Consider the following 701-residue polypeptide: Methionine--tRNA ligase (701 aa).

The 'HIGH' region motif lies at 13–23 (PYANGSIHLGH). The Zn(2+) site is built by Cys144, Cys147, Cys157, and Cys160. Positions 336-340 (KMSKS) match the 'KMSKS' region motif. An ATP-binding site is contributed by Lys339. The 102-residue stretch at 600 to 701 (DFSKIDLRIA…SGAQPGMRVK (102 aa)) folds into the tRNA-binding domain.

This sequence belongs to the class-I aminoacyl-tRNA synthetase family. MetG type 1 subfamily. Homodimer. Requires Zn(2+) as cofactor.

It is found in the cytoplasm. The enzyme catalyses tRNA(Met) + L-methionine + ATP = L-methionyl-tRNA(Met) + AMP + diphosphate. Its function is as follows. Is required not only for elongation of protein synthesis but also for the initiation of all mRNA translation through initiator tRNA(fMet) aminoacylation. The chain is Methionine--tRNA ligase from Nitrosomonas eutropha (strain DSM 101675 / C91 / Nm57).